The following is a 555-amino-acid chain: Glutamine--tRNA ligase (555 aa).

A 'HIGH' region motif is present at residues 34-44 (PEPNGYLHIGH). Residues 35 to 37 (EPN) and 41 to 47 (HIGHAKS) contribute to the ATP site. L-glutamine is bound by residues Asp-67 and Tyr-212. Residues Thr-231, 261 to 262 (RL), and 269 to 271 (MSK) each bind ATP. The 'KMSKS' region motif lies at 268-272 (IMSKR).

The protein belongs to the class-I aminoacyl-tRNA synthetase family. As to quaternary structure, monomer.

The protein localises to the cytoplasm. It catalyses the reaction tRNA(Gln) + L-glutamine + ATP = L-glutaminyl-tRNA(Gln) + AMP + diphosphate. The polypeptide is Glutamine--tRNA ligase (Yersinia pseudotuberculosis serotype O:3 (strain YPIII)).